Reading from the N-terminus, the 817-residue chain is Transcription factor yanR (817 aa).

The zn(2)-C6 fungal-type DNA-binding region spans 19 to 46 (CIVCRRRKVRCGREHPECANCVRMKENC). 3 disordered regions span residues 102–161 (GNVL…PQVD), 180–218 (HHAS…YSGL), and 733–775 (SLSS…VADS). A compositionally biased stretch (pro residues) spans 113 to 127 (LPRPTISPASAPPPQ). Residues 146-158 (SSTILTPAPSSHP) are compositionally biased toward polar residues. The span at 184 to 195 (SRAGTSRTSSVS) shows a compositional bias: low complexity. Composition is skewed to polar residues over residues 208-217 (APSTSTSYSG) and 748-760 (EAPS…QMPS).

The protein localises to the nucleus. Its function is as follows. Transcription factor that regulates the expression of the gene cluster that mediates the biosynthesis of yanuthone D, a fungal isoprenoid epoxycyclohexenone that acts as an antibiotic against fungi and bacteria. The polypeptide is Transcription factor yanR (Aspergillus niger (strain ATCC 1015 / CBS 113.46 / FGSC A1144 / LSHB Ac4 / NCTC 3858a / NRRL 328 / USDA 3528.7)).